The primary structure comprises 898 residues: Chaperone protein ClpB 1 (898 aa).

The Clp R domain maps to 6–148; the sequence is PTKFTEQAWD…ELAIKAIRGS (143 aa). Repeat regions lie at residues 9–74 and 85–148; these read FTEQ…TNRQ and LGRS…IRGS. Residues 161–344 are NBD1; the sequence is EALDKYGRDL…RRFQQVYVKQ (184 aa). An ATP-binding site is contributed by 208–215; it reads GEPGVGKT. A linker region spans residues 345–560; it reads PSVDDTISIL…IAEIVAGWTG (216 aa). Residues 395-536 are a coiled coil; sequence IDLVDEAAAR…KESKLLEIQG (142 aa). Residues 570–781 form an NBD2 region; the sequence is ERQKLLQLEG…RIDDLIIFHT (212 aa). 620–627 provides a ligand contact to ATP; sequence GPTGVGKT. Positions 782–898 are C-terminal; the sequence is LKRDELRRIV…TAVEVEVLSS (117 aa).

This sequence belongs to the ClpA/ClpB family. Homohexamer. The oligomerization is ATP-dependent.

It is found in the cytoplasm. Functionally, part of a stress-induced multi-chaperone system, it is involved in the recovery of the cell from heat-induced damage, in cooperation with DnaK, DnaJ and GrpE. Acts before DnaK, in the processing of protein aggregates. Protein binding stimulates the ATPase activity; ATP hydrolysis unfolds the denatured protein aggregates, which probably helps expose new hydrophobic binding sites on the surface of ClpB-bound aggregates, contributing to the solubilization and refolding of denatured protein aggregates by DnaK. This is Chaperone protein ClpB 1 (clpB1) from Synechocystis sp. (strain ATCC 27184 / PCC 6803 / Kazusa).